We begin with the raw amino-acid sequence, 465 residues long: Glutamate--tRNA ligase (465 aa).

The 'HIGH' region motif lies at 8 to 18 (PSPTGHLHIGG). Residues cysteine 97, cysteine 99, cysteine 124, and glutamate 126 each coordinate Zn(2+). The 'KMSKS' region signature appears at 234–238 (RLSKR). Lysine 237 provides a ligand contact to ATP.

Belongs to the class-I aminoacyl-tRNA synthetase family. Glutamate--tRNA ligase type 1 subfamily. In terms of assembly, monomer. Zn(2+) is required as a cofactor.

It is found in the cytoplasm. The enzyme catalyses tRNA(Glu) + L-glutamate + ATP = L-glutamyl-tRNA(Glu) + AMP + diphosphate. Functionally, catalyzes the attachment of glutamate to tRNA(Glu) in a two-step reaction: glutamate is first activated by ATP to form Glu-AMP and then transferred to the acceptor end of tRNA(Glu). This Thermodesulfovibrio yellowstonii (strain ATCC 51303 / DSM 11347 / YP87) protein is Glutamate--tRNA ligase.